The sequence spans 407 residues: Cation efflux system protein CusB (407 aa).

The signal sequence occupies residues 1 to 28; sequence MKKIALIIGSMIAGGIISAAGFTWVAKA.

Belongs to the membrane fusion protein (MFP) (TC 8.A.1) family. As to quaternary structure, the cus efflux system is composed of CusA, CusB, CusC and CusF.

Functionally, part of a cation efflux system that mediates resistance to copper and silver. The protein is Cation efflux system protein CusB (cusB) of Escherichia coli (strain K12).